The sequence spans 70 residues: Large ribosomal subunit protein uL29 (70 aa).

Belongs to the universal ribosomal protein uL29 family.

This Symbiobacterium thermophilum (strain DSM 24528 / JCM 14929 / IAM 14863 / T) protein is Large ribosomal subunit protein uL29.